Consider the following 137-residue polypeptide: Beta-synuclein (137 aa).

2 tandem repeats follow at residues 20–30 (EKTKQGVTEAA) and 31–41 (EKTKEGVLYVG). The 4 X 11 AA tandem repeats of [EGS]-K-T-K-[EQ]-[GQ]-V-X(4) stretch occupies residues 20–67 (EKTKQGVTEAAEKTKEGVLYVGSKTKEGVVQGVASVAEKTKEQASHLG). A 3; approximate repeat occupies 42-56 (SKTKEGVVQGVASVA). Residues 57–67 (EKTKEQASHLG) form repeat 4. The segment covering 88–97 (EFPTDLKPEE) has biased composition (basic and acidic residues). The tract at residues 88 to 137 (EFPTDLKPEEVAQEAAEEPLIEPLMEPEGESYEDSPQEEYQEYEPEAKGP) is disordered. A compositionally biased stretch (acidic residues) spans 98 to 131 (VAQEAAEEPLIEPLMEPEGESYEDSPQEEYQEYE). Ser-118 carries the phosphoserine; by BARK1, CK2 and GRK5 modification.

This sequence belongs to the synuclein family. In terms of processing, phosphorylated. Phosphorylation by G-protein coupled receptor kinases (GRK) is more efficient than phosphorylation by CK1, CK2 and CaM-kinase II. As to expression, expressed specifically in brain.

The protein localises to the cytoplasm. Its function is as follows. May be involved in neuronal plasticity. This Rattus norvegicus (Rat) protein is Beta-synuclein (Sncb).